The following is a 373-amino-acid chain: Erythronate-4-phosphate dehydrogenase (373 aa).

2 residues coordinate substrate: serine 45 and threonine 67. Residues aspartate 147, 207-209 (ASR), and aspartate 233 each bind NAD(+). The active site involves arginine 209. Glutamate 238 is a catalytic residue. Histidine 255 (proton donor) is an active-site residue. Glycine 258 is a binding site for NAD(+).

This sequence belongs to the D-isomer specific 2-hydroxyacid dehydrogenase family. PdxB subfamily. Homodimer.

It localises to the cytoplasm. The catalysed reaction is 4-phospho-D-erythronate + NAD(+) = (R)-3-hydroxy-2-oxo-4-phosphooxybutanoate + NADH + H(+). Its pathway is cofactor biosynthesis; pyridoxine 5'-phosphate biosynthesis; pyridoxine 5'-phosphate from D-erythrose 4-phosphate: step 2/5. Functionally, catalyzes the oxidation of erythronate-4-phosphate to 3-hydroxy-2-oxo-4-phosphonooxybutanoate. This Pseudoalteromonas translucida (strain TAC 125) protein is Erythronate-4-phosphate dehydrogenase.